A 298-amino-acid polypeptide reads, in one-letter code: ATP synthase gamma chain (298 aa).

Belongs to the ATPase gamma chain family. As to quaternary structure, F-type ATPases have 2 components, CF(1) - the catalytic core - and CF(0) - the membrane proton channel. CF(1) has five subunits: alpha(3), beta(3), gamma(1), delta(1), epsilon(1). CF(0) has three main subunits: a, b and c.

It localises to the cell membrane. Produces ATP from ADP in the presence of a proton gradient across the membrane. The gamma chain is believed to be important in regulating ATPase activity and the flow of protons through the CF(0) complex. The chain is ATP synthase gamma chain from Mycobacterium leprae (strain Br4923).